The primary structure comprises 108 residues: Movement protein TGB2 (108 aa).

Residues 1–8 (MPLTPPPD) lie on the Cytoplasmic side of the membrane. Residues 9-29 (YTKPFIAVVVGGTLAAFVLLL) traverse the membrane as a helical segment. Over 30–71 (TRNTLPHTGDNLHSLPHGGTYCDGTKRIRYGGPHRSHVPELP) the chain is Lumenal. Residues 72-92 (AKSWALITVVAILIALHFSCL) form a helical membrane-spanning segment. Residues 93-108 (RTHRVHRCVLCHTTSG) are Cytoplasmic-facing.

This sequence belongs to the Tymovirales TGBp2 protein family.

It is found in the host endoplasmic reticulum membrane. Its function is as follows. Plays a role in viral cell-to-cell propagation, by facilitating genome transport to neighboring plant cells through plasmosdesmata,. The sequence is that of Movement protein TGB2 from Lily virus X.